We begin with the raw amino-acid sequence, 431 residues long: Enolase (431 aa).

Q166 lines the (2R)-2-phosphoglycerate pocket. The active-site Proton donor is the E208. D245, E288, and D315 together coordinate Mg(2+). (2R)-2-phosphoglycerate is bound by residues K340, R369, S370, and K391. K340 serves as the catalytic Proton acceptor.

Belongs to the enolase family. Mg(2+) serves as cofactor.

The protein localises to the cytoplasm. Its subcellular location is the secreted. It localises to the cell surface. The catalysed reaction is (2R)-2-phosphoglycerate = phosphoenolpyruvate + H2O. Its pathway is carbohydrate degradation; glycolysis; pyruvate from D-glyceraldehyde 3-phosphate: step 4/5. Catalyzes the reversible conversion of 2-phosphoglycerate (2-PG) into phosphoenolpyruvate (PEP). It is essential for the degradation of carbohydrates via glycolysis. The polypeptide is Enolase (Clostridium botulinum (strain 657 / Type Ba4)).